We begin with the raw amino-acid sequence, 480 residues long: Mannose-1-phosphate guanylyltransferase ManC (480 aa).

It belongs to the mannose-6-phosphate isomerase type 2 family.

It carries out the reaction alpha-D-mannose 1-phosphate + GTP + H(+) = GDP-alpha-D-mannose + diphosphate. It participates in nucleotide-sugar biosynthesis; GDP-alpha-D-mannose biosynthesis; GDP-alpha-D-mannose from alpha-D-mannose 1-phosphate (GTP route): step 1/1. Functionally, involved in the biosynthesis of the capsular polysaccharide colanic acid. The chain is Mannose-1-phosphate guanylyltransferase ManC (manC) from Salmonella typhimurium (strain LT2 / SGSC1412 / ATCC 700720).